A 762-amino-acid chain; its full sequence is Probable inorganic carbon transporter subunit DabA (762 aa).

4 residues coordinate Zn(2+): Cys-279, Asp-281, His-461, and Cys-476.

It belongs to the inorganic carbon transporter (TC 9.A.2) DabA family. In terms of assembly, forms a complex with DabB. Zn(2+) is required as a cofactor.

Its subcellular location is the cell inner membrane. In terms of biological role, part of an energy-coupled inorganic carbon pump. In Legionella pneumophila (strain Lens), this protein is Probable inorganic carbon transporter subunit DabA.